The following is a 192-amino-acid chain: Putative manganese efflux pump MntP (192 aa).

Helical transmembrane passes span 3-23, 38-58, 61-81, 101-121, 130-150, and 167-187; these read LIFTSVLIGIGLAMDCLAVSF, FILALFFGGFQGGMTLLGWLL, GFADAIAAYDHWVAAGLLFII, VFNFVAVFILAVATSIDALAV, IVPLIPALIIGLISAIFSVGG, and ILGGVILTLIGIRILLEHLVW.

It belongs to the MntP (TC 9.B.29) family.

It is found in the cell membrane. Its function is as follows. Probably functions as a manganese efflux pump. The polypeptide is Putative manganese efflux pump MntP (Methanospirillum hungatei JF-1 (strain ATCC 27890 / DSM 864 / NBRC 100397 / JF-1)).